The following is an 848-amino-acid chain: Phosphatidate phosphatase LPIN3 (848 aa).

Residues 1–108 (MNYVGQLAET…VPPRLCTSPI (108 aa)) form an N-LIP region. 3 disordered regions span residues 97 to 233 (EDVP…SPLR), 271 to 298 (PEEP…PGVR), and 314 to 373 (AVDS…NQHL). Positions 135-144 (GRRKRRRRRK) match the Nuclear localization signal motif. Residues 135-146 (GRRKRRRRRKPR) are compositionally biased toward basic residues. Residues 151–164 (DAVDSSSEELEAGA) show a composition bias toward acidic residues. Phosphoserine occurs at positions 155 and 156. The segment covering 165–191 (ESELTLLEKPTPESPSAQEAEEPSSQP) has biased composition (low complexity). At Ser218 the chain carries Phosphoserine. Residues 271 to 282 (PEEPSPSSSPSE) show a composition bias toward low complexity. A compositionally biased stretch (polar residues) spans 342–358 (KSWSWTTPESHTPSGHP). Ser460 carries the phosphoserine modification. Over residues 536–556 (EEHSSQREKAATRKQQGEKTE) the composition is skewed to basic and acidic residues. The segment at 536-568 (EEHSSQREKAATRKQQGEKTEVLSSDDDVPDSP) is disordered. A C-LIP region spans residues 587–789 (YKKSLRLSSD…RIFTVNPRGE (203 aa)). Positions 641-645 (DIDGT) match the DXDXT motif motif. An LXXIL motif motif is present at residues 652–656 (LGHIL).

It belongs to the lipin family. It depends on Mg(2+) as a cofactor. Significant expression in intestine and other regions of the gastrointestinal tract.

The protein localises to the nucleus. The catalysed reaction is a 1,2-diacyl-sn-glycero-3-phosphate + H2O = a 1,2-diacyl-sn-glycerol + phosphate. With respect to regulation, inhibited by N-ethylmaleimide. In terms of biological role, magnesium-dependent phosphatidate phosphatase enzyme which catalyzes the conversion of phosphatidic acid to diacylglycerol during triglyceride, phosphatidylcholine and phosphatidylethanolamine biosynthesis therefore regulates fatty acid metabolism. This chain is Phosphatidate phosphatase LPIN3, found in Mus musculus (Mouse).